The primary structure comprises 214 residues: Pyridoxine/pyridoxamine 5'-phosphate oxidase (214 aa).

Substrate is bound by residues 9–12 (RKSY) and Lys-67. FMN contacts are provided by residues 62-67 (RIVLLK), 77-78 (YT), Arg-83, Lys-84, and Gln-106. Tyr-124, Arg-128, and Ser-132 together coordinate substrate. FMN is bound by residues 141-142 (QS) and Trp-186. Residue 192–194 (RLH) participates in substrate binding. Arg-196 is a binding site for FMN.

It belongs to the pyridoxamine 5'-phosphate oxidase family. As to quaternary structure, homodimer. The cofactor is FMN.

It carries out the reaction pyridoxamine 5'-phosphate + O2 + H2O = pyridoxal 5'-phosphate + H2O2 + NH4(+). It catalyses the reaction pyridoxine 5'-phosphate + O2 = pyridoxal 5'-phosphate + H2O2. The protein operates within cofactor metabolism; pyridoxal 5'-phosphate salvage; pyridoxal 5'-phosphate from pyridoxamine 5'-phosphate: step 1/1. It participates in cofactor metabolism; pyridoxal 5'-phosphate salvage; pyridoxal 5'-phosphate from pyridoxine 5'-phosphate: step 1/1. Functionally, catalyzes the oxidation of either pyridoxine 5'-phosphate (PNP) or pyridoxamine 5'-phosphate (PMP) into pyridoxal 5'-phosphate (PLP). The sequence is that of Pyridoxine/pyridoxamine 5'-phosphate oxidase from Leptospira interrogans serogroup Icterohaemorrhagiae serovar copenhageni (strain Fiocruz L1-130).